Consider the following 195-residue polypeptide: Imidazoleglycerol-phosphate dehydratase (195 aa).

Belongs to the imidazoleglycerol-phosphate dehydratase family.

It localises to the cytoplasm. It carries out the reaction D-erythro-1-(imidazol-4-yl)glycerol 3-phosphate = 3-(imidazol-4-yl)-2-oxopropyl phosphate + H2O. It functions in the pathway amino-acid biosynthesis; L-histidine biosynthesis; L-histidine from 5-phospho-alpha-D-ribose 1-diphosphate: step 6/9. This chain is Imidazoleglycerol-phosphate dehydratase, found in Ruegeria sp. (strain TM1040) (Silicibacter sp.).